Reading from the N-terminus, the 274-residue chain is Hydroxyethylthiazole kinase (274 aa).

Residue methionine 50 participates in substrate binding. Arginine 126 and serine 171 together coordinate ATP. Residue alanine 200 coordinates substrate.

It belongs to the Thz kinase family. Requires Mg(2+) as cofactor.

The catalysed reaction is 5-(2-hydroxyethyl)-4-methylthiazole + ATP = 4-methyl-5-(2-phosphooxyethyl)-thiazole + ADP + H(+). It participates in cofactor biosynthesis; thiamine diphosphate biosynthesis; 4-methyl-5-(2-phosphoethyl)-thiazole from 5-(2-hydroxyethyl)-4-methylthiazole: step 1/1. In terms of biological role, catalyzes the phosphorylation of the hydroxyl group of 4-methyl-5-beta-hydroxyethylthiazole (THZ). This chain is Hydroxyethylthiazole kinase, found in Acinetobacter baylyi (strain ATCC 33305 / BD413 / ADP1).